Reading from the N-terminus, the 248-residue chain is MALLEICCYSMECALTAQQNGADRVELCAAPKEGGLTPSLGVLKSVRQRVTIPVHPIIRPRGGDFCYSDGEFAAILEDVRTVRELGFPGLVTGVLDVDGNVDMPRMEKIMAAAGPLAVTFHRAFDMCANPLYTLNNLAELGIARVLTSGQKSDALQGLSKIMELIAHRDAPIIMAGAGVRAENLHHFLDAGVLEVHSSAGAWQASPMRYRNQGLSMSSDAHADEYSRYIVDGAAVAEMKGIIERHQAK.

It belongs to the CutC family. Homodimer.

The protein resides in the cytoplasm. This is PF03932 family protein CutC from Escherichia coli (strain 55989 / EAEC).